A 165-amino-acid chain; its full sequence is Transcription factor zip-10 (165 aa).

Residues 53 to 71 (ASLGTSTTSSSRCSSTESS) are compositionally biased toward low complexity. A disordered region spans residues 53–99 (ASLGTSTTSSSRCSSTESSAAPGKIRRGRPQQEIADGQDAHSQKKRH). Residues 104–150 (ARQYRAQMRQKVENVKSLHDEKEQLELEVKALRQAVSGLQQENAQKD) are a coiled coil.

Its subcellular location is the nucleus. Transcription factor that regulates the expression of genes in response to changes in temperature. In particular, binds to the promoter region of genes such as asp-17 in response to severe cold to warm temperature transitions to promote gene expression. Promotes stress-induced death, particularly in older animals, following cold shock followed by warming and this may have evolved as a form of kin survival under thermal stress conditions, favoring the survival of younger animals. This chain is Transcription factor zip-10, found in Caenorhabditis elegans.